The primary structure comprises 286 residues: ATP synthase gamma chain (286 aa).

It belongs to the ATPase gamma chain family. In terms of assembly, F-type ATPases have 2 components, CF(1) - the catalytic core - and CF(0) - the membrane proton channel. CF(1) has five subunits: alpha(3), beta(3), gamma(1), delta(1), epsilon(1). CF(0) has three main subunits: a, b and c.

It is found in the cell inner membrane. Its function is as follows. Produces ATP from ADP in the presence of a proton gradient across the membrane. The gamma chain is believed to be important in regulating ATPase activity and the flow of protons through the CF(0) complex. This Pseudomonas entomophila (strain L48) protein is ATP synthase gamma chain.